The chain runs to 634 residues: DNA-directed RNA polymerase subunit gamma (634 aa).

Zn(2+)-binding residues include Cys74, Cys76, Cys89, and Cys92. The Mg(2+) site is built by Asp471, Asp473, and Asp475.

It belongs to the RNA polymerase beta' chain family. RpoC1 subfamily. In cyanobacteria the RNAP catalytic core is composed of 2 alpha, 1 beta, 1 beta', 1 gamma and 1 omega subunit. When a sigma factor is associated with the core the holoenzyme is formed, which can initiate transcription. Requires Mg(2+) as cofactor. It depends on Zn(2+) as a cofactor.

It catalyses the reaction RNA(n) + a ribonucleoside 5'-triphosphate = RNA(n+1) + diphosphate. In terms of biological role, DNA-dependent RNA polymerase catalyzes the transcription of DNA into RNA using the four ribonucleoside triphosphates as substrates. The sequence is that of DNA-directed RNA polymerase subunit gamma from Prochlorococcus marinus subsp. pastoris (strain CCMP1986 / NIES-2087 / MED4).